A 182-amino-acid chain; its full sequence is Large ribosomal subunit protein uL16 (182 aa).

A disordered region spans residues 140–182 (EKPTQVGKAPPKSSFLPSDETETAAAQAGTEASSASSVTPLES). Over residues 162–176 (TAAAQAGTEASSASS) the composition is skewed to low complexity.

This sequence belongs to the universal ribosomal protein uL16 family. In terms of assembly, part of the 50S ribosomal subunit.

In terms of biological role, binds 23S rRNA and is also seen to make contacts with the A and possibly P site tRNAs. The polypeptide is Large ribosomal subunit protein uL16 (Prochlorococcus marinus (strain SARG / CCMP1375 / SS120)).